A 379-amino-acid chain; its full sequence is Chaperone protein DnaJ (379 aa).

The 66-residue stretch at 5–70 (DYYETLEVSQ…QKRAAYDQYG (66 aa)) folds into the J domain. The segment at 135–213 (GKSLEIKVPT…CRGQGRVEKT (79 aa)) adopts a CR-type zinc-finger fold. Residues Cys148, Cys151, Cys165, Cys168, Cys187, Cys190, Cys201, and Cys204 each contribute to the Zn(2+) site. CXXCXGXG motif repeat units follow at residues 148 to 155 (CEPCDGSG), 165 to 172 (CSTCHGHG), 187 to 194 (CPTCSGKG), and 201 to 208 (CTSCRGQG).

The protein belongs to the DnaJ family. Homodimer. It depends on Zn(2+) as a cofactor.

It is found in the cytoplasm. Its function is as follows. Participates actively in the response to hyperosmotic and heat shock by preventing the aggregation of stress-denatured proteins and by disaggregating proteins, also in an autonomous, DnaK-independent fashion. Unfolded proteins bind initially to DnaJ; upon interaction with the DnaJ-bound protein, DnaK hydrolyzes its bound ATP, resulting in the formation of a stable complex. GrpE releases ADP from DnaK; ATP binding to DnaK triggers the release of the substrate protein, thus completing the reaction cycle. Several rounds of ATP-dependent interactions between DnaJ, DnaK and GrpE are required for fully efficient folding. Also involved, together with DnaK and GrpE, in the DNA replication of plasmids through activation of initiation proteins. The polypeptide is Chaperone protein DnaJ (Colwellia maris).